The primary structure comprises 236 residues: UPF0257 lipoprotein YnfC (236 aa).

Positions 1–16 (MKKPLLLTLLCMILAG) are cleaved as a signal peptide. Cysteine 17 is lipidated: N-palmitoyl cysteine. Cysteine 17 carries S-diacylglycerol cysteine lipidation.

The protein belongs to the UPF0257 family.

Its subcellular location is the cell membrane. The protein is UPF0257 lipoprotein YnfC of Salmonella paratyphi C (strain RKS4594).